Here is a 511-residue protein sequence, read N- to C-terminus: Maturase K (511 aa).

Belongs to the intron maturase 2 family. MatK subfamily.

It localises to the plastid. The protein resides in the chloroplast. Functionally, usually encoded in the trnK tRNA gene intron. Probably assists in splicing its own and other chloroplast group II introns. The polypeptide is Maturase K (Bromelia plumieri (Karatas)).